We begin with the raw amino-acid sequence, 824 residues long: Kinesin-like protein KIFC3 (824 aa).

The tract at residues 27–79 is disordered; sequence EPKPGMARPAPASPAARPFPHTGQGRLRTGRGKDILPSGEEDSTSRTAARPSL. Residues 33–46 show a composition bias toward low complexity; it reads ARPAPASPAARPFP. 2 coiled-coil regions span residues 100-360 and 393-430; these read LTVQ…ENLA and LLQEALRSVKAEIGQAIEEVNSNNQELLRKYRRELQLR. In terms of domain architecture, Kinesin motor spans 443–766; the sequence is NIRVIARVRP…LRFAERVRSV (324 aa). 526-533 contributes to the ATP binding site; the sequence is GQTGAGKT. The interval 771–824 is disordered; it reads GSRRTELGSWSSQEHLEWEPACQTPQPTARAHSAPGSGTSSRPGSIRRKLQPSA. Phosphoserine occurs at positions 811 and 815. Over residues 815–824 the composition is skewed to basic residues; that stretch reads SIRRKLQPSA.

This sequence belongs to the TRAFAC class myosin-kinesin ATPase superfamily. Kinesin family. Interacts with annexin XIIIB. In terms of tissue distribution, predominant expression in the kidney, testis and ovary. Also expressed in brain, heart, liver, lung and uterus.

The protein resides in the cytoplasm. The protein localises to the cytoskeleton. Its subcellular location is the cytoplasmic vesicle membrane. It is found in the cell junction. It localises to the adherens junction. The protein resides in the microtubule organizing center. The protein localises to the centrosome. In terms of biological role, minus-end microtubule-dependent motor protein. Involved in apically targeted transport. Required for zonula adherens maintenance. The chain is Kinesin-like protein KIFC3 (Kifc3) from Mus musculus (Mouse).